The chain runs to 420 residues: UDP-N-acetylglucosamine 1-carboxyvinyltransferase (420 aa).

22–23 (KN) contributes to the phosphoenolpyruvate binding site. R94 is a binding site for UDP-N-acetyl-alpha-D-glucosamine. The active-site Proton donor is C118. A 2-(S-cysteinyl)pyruvic acid O-phosphothioketal modification is found at C118. Residues D307 and I329 each coordinate UDP-N-acetyl-alpha-D-glucosamine.

This sequence belongs to the EPSP synthase family. MurA subfamily.

It localises to the cytoplasm. It carries out the reaction phosphoenolpyruvate + UDP-N-acetyl-alpha-D-glucosamine = UDP-N-acetyl-3-O-(1-carboxyvinyl)-alpha-D-glucosamine + phosphate. It participates in cell wall biogenesis; peptidoglycan biosynthesis. Functionally, cell wall formation. Adds enolpyruvyl to UDP-N-acetylglucosamine. In Gluconacetobacter diazotrophicus (strain ATCC 49037 / DSM 5601 / CCUG 37298 / CIP 103539 / LMG 7603 / PAl5), this protein is UDP-N-acetylglucosamine 1-carboxyvinyltransferase.